The following is a 357-amino-acid chain: CCN family member 3 (357 aa).

Positions 1-31 (MQSVQSTSFCLRKQCLCLTFLLLHLLGQVAA) are cleaved as a signal peptide. Positions 32-105 (TQRCPPQCPG…SNQTGICTAV (74 aa)) constitute an IGFBP N-terminal domain. Cystine bridges form between cysteine 35–cysteine 61, cysteine 39–cysteine 63, cysteine 43–cysteine 64, cysteine 50–cysteine 67, cysteine 75–cysteine 89, and cysteine 81–cysteine 102. N-linked (GlcNAc...) asparagine glycosylation occurs at asparagine 97. The VWFC domain occupies 108–174 (DNCVFDGVIY…GECCEKWICG (67 aa)). Positions 205 to 250 (NCIEQTTEWTACSKSCGMGFSTRVTNRNRQCEMLKQTRLCMVRPCE) constitute a TSP type-1 domain. Residue cysteine 244 is the site of S-palmitoyl cysteine attachment. 5 cysteine pairs are disulfide-bonded: cysteine 264–cysteine 301, cysteine 281–cysteine 315, cysteine 292–cysteine 331, cysteine 295–cysteine 333, and cysteine 300–cysteine 337. The CTCK domain maps to 264-338 (CLRTKKSLKA…GTCTCHTNCP (75 aa)). Asparagine 280 carries an N-linked (GlcNAc...) asparagine glycan.

This sequence belongs to the CCN family. Interacts with FBLN1. Interacts (via CTCK domain) with NOTCH1 (via the EGF-like repeat region). Interacts with GJA1/CX43. Interacts with ITGA5:ITGB1, ITGAV:ITGB3 and ITGAV:ITGB5. Interacts with ZDHHC22; the interaction may lead to CCN3 palmitoylation. Post-translationally, may be palmitoylated on Cys-244, which is important for extracellular secretion. In terms of tissue distribution, expressed in endothelial cells (at protein level). Expressed in bone marrow and thymic cells.

It localises to the secreted. The protein resides in the cytoplasm. The protein localises to the cell junction. It is found in the gap junction. In terms of biological role, immediate-early protein playing a role in various cellular processes including proliferation, adhesion, migration, differentiation and survival. Acts by binding to integrins or membrane receptors such as NOTCH1. Essential regulator of hematopoietic stem and progenitor cell function. Inhibits myogenic differentiation through the activation of Notch-signaling pathway. Inhibits vascular smooth muscle cells proliferation by increasing expression of cell-cycle regulators such as CDKN2B or CDKN1A independently of TGFB1 signaling. Ligand of integrins ITGAV:ITGB3 and ITGA5:ITGB1, acts directly upon endothelial cells to stimulate pro-angiogenic activities and induces angiogenesis. In endothelial cells, supports cell adhesion, induces directed cell migration (chemotaxis) and promotes cell survival. Also plays a role in cutaneous wound healing acting as integrin receptor ligand. Supports skin fibroblast adhesion through ITGA5:ITGB1 and ITGA6:ITGB1 and induces fibroblast chemotaxis through ITGAV:ITGB5. Seems to enhance bFGF-induced DNA synthesis in fibroblasts. Involved in bone regeneration as a negative regulator. Enhances the articular chondrocytic phenotype, whereas it repressed the one representing endochondral ossification. Impairs pancreatic beta-cell function, inhibits beta-cell proliferation and insulin secretion. Plays a role as negative regulator of endothelial pro-inflammatory activation reducing monocyte adhesion, its anti-inflammatory effects occur secondary to the inhibition of NF-kappaB signaling pathway. Contributes to the control and coordination of inflammatory processes in atherosclerosis. Attenuates inflammatory pain through regulation of IL1B- and TNF-induced MMP9, MMP2 and CCL2 expression. Inhibits MMP9 expression through ITGB1 engagement. Brain osteoanabolic hormone. Drives osteogenesis in osteochondral skeletal stem cells. During lactation, maintains the maternal skeleton and viability of offspring. The polypeptide is CCN family member 3 (Homo sapiens (Human)).